Here is a 339-residue protein sequence, read N- to C-terminus: D-erythrose-4-phosphate dehydrogenase (339 aa).

11–12 (RI) contacts NAD(+). Residues 153-155 (SCT), arginine 199, 212-213 (TK), and arginine 235 each bind substrate. Cysteine 154 acts as the Nucleophile in catalysis. Asparagine 317 provides a ligand contact to NAD(+).

This sequence belongs to the glyceraldehyde-3-phosphate dehydrogenase family. Epd subfamily. As to quaternary structure, homotetramer.

Its subcellular location is the cytoplasm. It carries out the reaction D-erythrose 4-phosphate + NAD(+) + H2O = 4-phospho-D-erythronate + NADH + 2 H(+). It participates in cofactor biosynthesis; pyridoxine 5'-phosphate biosynthesis; pyridoxine 5'-phosphate from D-erythrose 4-phosphate: step 1/5. In terms of biological role, catalyzes the NAD-dependent conversion of D-erythrose 4-phosphate to 4-phosphoerythronate. This chain is D-erythrose-4-phosphate dehydrogenase, found in Shewanella pealeana (strain ATCC 700345 / ANG-SQ1).